Here is a 270-residue protein sequence, read N- to C-terminus: Formamidopyrimidine-DNA glycosylase (270 aa).

P2 (schiff-base intermediate with DNA) is an active-site residue. Catalysis depends on E3, which acts as the Proton donor. K58 acts as the Proton donor; for beta-elimination activity in catalysis. The DNA site is built by H91, R110, and R151. Residues 236–270 (AVYGREGEPCTHCGAPLQGVRIGGRATIYCSQCQR) form an FPG-type zinc finger. Catalysis depends on R260, which acts as the Proton donor; for delta-elimination activity.

The protein belongs to the FPG family. Monomer. The cofactor is Zn(2+).

It carries out the reaction Hydrolysis of DNA containing ring-opened 7-methylguanine residues, releasing 2,6-diamino-4-hydroxy-5-(N-methyl)formamidopyrimidine.. The enzyme catalyses 2'-deoxyribonucleotide-(2'-deoxyribose 5'-phosphate)-2'-deoxyribonucleotide-DNA = a 3'-end 2'-deoxyribonucleotide-(2,3-dehydro-2,3-deoxyribose 5'-phosphate)-DNA + a 5'-end 5'-phospho-2'-deoxyribonucleoside-DNA + H(+). In terms of biological role, involved in base excision repair of DNA damaged by oxidation or by mutagenic agents. Acts as a DNA glycosylase that recognizes and removes damaged bases. Has a preference for oxidized purines, such as 7,8-dihydro-8-oxoguanine (8-oxoG). Has AP (apurinic/apyrimidinic) lyase activity and introduces nicks in the DNA strand. Cleaves the DNA backbone by beta-delta elimination to generate a single-strand break at the site of the removed base with both 3'- and 5'-phosphates. In Acidithiobacillus ferrooxidans (strain ATCC 23270 / DSM 14882 / CIP 104768 / NCIMB 8455) (Ferrobacillus ferrooxidans (strain ATCC 23270)), this protein is Formamidopyrimidine-DNA glycosylase.